The sequence spans 166 residues: Disulfide bond formation protein B (166 aa).

Over 1–10 (MGLNITNRQG) the chain is Cytoplasmic. The helical transmembrane segment at 11–27 (FLLVAAACAGAIGFALF) threads the bilayer. The Periplasmic portion of the chain corresponds to 28–45 (AQYQLGEEPCPLCILQRI). C37 and C40 form a disulfide bridge. Residues 46 to 62 (GVMAVGALALLAALHNP) form a helical membrane-spanning segment. Residues 63–69 (GKTGAKV) are Cytoplasmic-facing. The chain crosses the membrane as a helical span at residues 70–86 (WGGLMTLAALSGAGVSL). The Periplasmic portion of the chain corresponds to 87–143 (RQLWLQSLPADQVPQCGPGLEFLMESFPLWEVLSKVLKGSGECAAIQGRFLGMTMPF). Cysteines 102 and 129 form a disulfide. Residues 144–162 (WVAVFFAGVIVWTLWLVGR) traverse the membrane as a helical segment. Residues 163-166 (RRRG) lie on the Cytoplasmic side of the membrane.

It belongs to the DsbB family.

It localises to the cell inner membrane. Required for disulfide bond formation in some periplasmic proteins. Acts by oxidizing the DsbA protein. This chain is Disulfide bond formation protein B, found in Chromobacterium violaceum (strain ATCC 12472 / DSM 30191 / JCM 1249 / CCUG 213 / NBRC 12614 / NCIMB 9131 / NCTC 9757 / MK).